The primary structure comprises 927 residues: Isoleucine--tRNA ligase (927 aa).

A 'HIGH' region motif is present at residues 57–67 (PYANGHIHIGH). E561 contacts L-isoleucyl-5'-AMP. The 'KMSKS' region signature appears at 602 to 606 (KMSKS). K605 contributes to the ATP binding site. 4 residues coordinate Zn(2+): C897, C900, C917, and C920.

This sequence belongs to the class-I aminoacyl-tRNA synthetase family. IleS type 1 subfamily. Monomer. Zn(2+) is required as a cofactor.

Its subcellular location is the cytoplasm. The enzyme catalyses tRNA(Ile) + L-isoleucine + ATP = L-isoleucyl-tRNA(Ile) + AMP + diphosphate. In terms of biological role, catalyzes the attachment of isoleucine to tRNA(Ile). As IleRS can inadvertently accommodate and process structurally similar amino acids such as valine, to avoid such errors it has two additional distinct tRNA(Ile)-dependent editing activities. One activity is designated as 'pretransfer' editing and involves the hydrolysis of activated Val-AMP. The other activity is designated 'posttransfer' editing and involves deacylation of mischarged Val-tRNA(Ile). This is Isoleucine--tRNA ligase from Syntrophotalea carbinolica (strain DSM 2380 / NBRC 103641 / GraBd1) (Pelobacter carbinolicus).